We begin with the raw amino-acid sequence, 407 residues long: Serine/threonine transporter SstT (407 aa).

The next 9 membrane-spanning stretches (helical) occupy residues 12–32 (GNLIVQICIGIVLGILIGISS), 42–62 (LGILFTSALKAIAPMLVFILI), 81–101 (IIILYIVGTFLASACAVLANF), 141–161 (ALSSGNYLGILTWAIAGGIAL), 179–199 (VLKIVKFIVKLAPFGIFGLVA), 218–238 (ILLVATMLFVTFVINALIVFF), 245–267 (FPLIFICLRHSAFFAFFTRSSAA), 288–308 (ISIPLGATINMAGAAVTIAIL), and 330–350 (IIATFAACGASGVAGGSLLLI).

Belongs to the dicarboxylate/amino acid:cation symporter (DAACS) (TC 2.A.23) family.

Its subcellular location is the cell inner membrane. It catalyses the reaction L-serine(in) + Na(+)(in) = L-serine(out) + Na(+)(out). The catalysed reaction is L-threonine(in) + Na(+)(in) = L-threonine(out) + Na(+)(out). Functionally, involved in the import of serine and threonine into the cell, with the concomitant import of sodium (symport system). This Campylobacter jejuni subsp. jejuni serotype O:23/36 (strain 81-176) protein is Serine/threonine transporter SstT.